Consider the following 471-residue polypeptide: MASLRSATALSRLRSRAGQQSNLSNSVRWLQMQSSADLDLHSQLKEMIPEQQERLKKVKSDLGKAQLGNITIDVVIGGMRGMTGLLWETSLLDPDEGIRFRGLSIPECQKLLPAAKPDGEPLPEGLLWLLLTGKVPSKEQVDGLSKELRDRATVPDYVYKAIDALPVSAHPMTQFASGVMALQVQSEFQEAYEKGIHKSKSWEPTSEDSLNLIARVPVVAAYVYQRIYKDGKIIPKDDSLDYGGNFSHMLGFDDPKMLELMRLYVTIHSDHEGGNVSAHTGHLVASALSDPYLSFLAALNGLAGPLHGLANQEVLLWIKSVVDECGENVTTEQLKDYVWKTLNSGKVVPGFGHGVLRKTDPRYTCQREFALKHLPDDPLFQLVSKLYEVVPPILTKLGKVKNPWPNVDAHSGVLLNHFGLAEARYYTVLFGVSRSLGICSQLIWDRALGLPLERPKSVTLDWIEKNCKKAA.

The N-terminal 18 residues, 1–18 (MASLRSATALSRLRSRAG), are a transit peptide targeting the mitochondrion. Residues histidine 307, histidine 353, and aspartate 408 contribute to the active site.

It belongs to the citrate synthase family. As to quaternary structure, homodimer.

Its subcellular location is the mitochondrion matrix. It carries out the reaction oxaloacetate + acetyl-CoA + H2O = citrate + CoA + H(+). The protein operates within carbohydrate metabolism; tricarboxylic acid cycle; isocitrate from oxaloacetate: step 1/2. This chain is Citrate synthase, mitochondrial (CIT), found in Citrus maxima (Pomelo).